Consider the following 542-residue polypeptide: Cryptochrome-1 (542 aa).

In terms of domain architecture, Photolyase/cryptochrome alpha/beta spans G5–L140. FAD is bound by residues R237, S265, S267, Q311, H378, D410–D412, C416, and N419.

Belongs to the DNA photolyase class-1 family. As to quaternary structure, interacts with tim and per; promoted by light conditions. Interaction with tim irreversibly commits tim to proteasomal degradation. Interacts with l(1)G0136/CG8198. Requires FAD as cofactor. As to expression, expressed at higher levels in the head than in body and it is more expressed in antennae than in legs, wings and mouth appendages. Prominent expression is seen in cells of the lateral brain, which are close to or coincident with the clock neurons. Abundance oscillates in a circadian manner.

The protein resides in the cytoplasm. The protein localises to the perinuclear region. Its subcellular location is the nucleus. Functionally, blue light-dependent regulator that is the input of the circadian feedback loop. Has no photolyase activity for cyclobutane pyrimidine dimers or 6-4 photoproducts. Regulation of expression by light suggests a role in photoreception for locomotor activity rhythms. Functions, together with per, as a transcriptional repressor required for the oscillation of peripheral circadian clocks and for the correct specification of clock cells. Genes directly activated by the transcription factors Clock (Clk) and cycle (cyc) are repressed by cry. Necessary for light-dependent magnetosensitivity, an intact circadian system is not required for the magnetoreception mechanism to operate. Required for both the naive and trained responses to magnetic field, consistent with the notion that cry is in the input pathway of magnetic sensing. In Drosophila melanogaster (Fruit fly), this protein is Cryptochrome-1.